The following is a 570-amino-acid chain: Glycine--tRNA ligase (570 aa).

Residues arginine 99 and glutamate 165 each contribute to the substrate site. ATP contacts are provided by residues 197-199 (RNE), 207-212 (IRLREF), 324-325 (EC), and 443-446 (GIDR). 212-216 (FTQAE) contributes to the substrate binding site. 439 to 443 (EPSFG) contacts substrate.

It belongs to the class-II aminoacyl-tRNA synthetase family.

It is found in the cytoplasm. The enzyme catalyses tRNA(Gly) + glycine + ATP = glycyl-tRNA(Gly) + AMP + diphosphate. In terms of biological role, catalyzes the attachment of glycine to tRNA(Gly). The sequence is that of Glycine--tRNA ligase from Pyrococcus horikoshii (strain ATCC 700860 / DSM 12428 / JCM 9974 / NBRC 100139 / OT-3).